A 326-amino-acid chain; its full sequence is Light-induced protein, chloroplastic (326 aa).

The N-terminal 63 residues, 1-63 (MASISSLNQI…TNPKPKFTAQ (63 aa)), are a transit peptide targeting the chloroplast.

This sequence belongs to the LIPC family. Associates with the major light-harvesting antenna complex polypeptides of the PSII oxygen-evolving complex. Expressed in leaves.

It is found in the plastid. It localises to the chloroplast thylakoid membrane. Functionally, required for normal plant growth. May be both photoprotective and play an ancillary role in photosynthesis. May structurally stabilize thylakoids during osmotic and oxidative stress. This chain is Light-induced protein, chloroplastic, found in Solanum tuberosum (Potato).